The chain runs to 470 residues: Ribosomal protein uS12 methylthiotransferase RimO (470 aa).

The 112-residue stretch at 20–131 (PTVAFAHLGC…IVEVLQQVEA (112 aa)) folds into the MTTase N-terminal domain. Positions 29, 65, 94, 169, 173, and 176 each coordinate [4Fe-4S] cluster. Positions 155–384 (TTGEAVAYLK…MTLQQPISAA (230 aa)) constitute a Radical SAM core domain. In terms of domain architecture, TRAM spans 387 to 458 (ASWIGKTVDV…IYDLSGHVVS (72 aa)).

The protein belongs to the methylthiotransferase family. RimO subfamily. [4Fe-4S] cluster serves as cofactor.

The protein localises to the cytoplasm. It carries out the reaction L-aspartate(89)-[ribosomal protein uS12]-hydrogen + (sulfur carrier)-SH + AH2 + 2 S-adenosyl-L-methionine = 3-methylsulfanyl-L-aspartate(89)-[ribosomal protein uS12]-hydrogen + (sulfur carrier)-H + 5'-deoxyadenosine + L-methionine + A + S-adenosyl-L-homocysteine + 2 H(+). Catalyzes the methylthiolation of an aspartic acid residue of ribosomal protein uS12. In Synechococcus sp. (strain CC9311), this protein is Ribosomal protein uS12 methylthiotransferase RimO.